A 338-amino-acid chain; its full sequence is Probable replication factor C subunit 2 (338 aa).

G60–T67 is a binding site for ATP.

It belongs to the activator 1 small subunits family. Heteropentamer of various rfc subunits that forms a complex (RFC) with PCNA in the presence of ATP.

It localises to the nucleus. The elongation of primed DNA templates by DNA polymerase delta and epsilon requires the action of the accessory proteins PCNA and activator 1. The protein is Probable replication factor C subunit 2 (rfc2) of Dictyostelium discoideum (Social amoeba).